The chain runs to 145 residues: D-aminoacyl-tRNA deacylase (145 aa).

Positions 137-138 (GP) match the Gly-cisPro motif, important for rejection of L-amino acids motif.

This sequence belongs to the DTD family. As to quaternary structure, homodimer.

The protein localises to the cytoplasm. The enzyme catalyses glycyl-tRNA(Ala) + H2O = tRNA(Ala) + glycine + H(+). It catalyses the reaction a D-aminoacyl-tRNA + H2O = a tRNA + a D-alpha-amino acid + H(+). In terms of biological role, an aminoacyl-tRNA editing enzyme that deacylates mischarged D-aminoacyl-tRNAs. Also deacylates mischarged glycyl-tRNA(Ala), protecting cells against glycine mischarging by AlaRS. Acts via tRNA-based rather than protein-based catalysis; rejects L-amino acids rather than detecting D-amino acids in the active site. By recycling D-aminoacyl-tRNA to D-amino acids and free tRNA molecules, this enzyme counteracts the toxicity associated with the formation of D-aminoacyl-tRNA entities in vivo and helps enforce protein L-homochirality. This chain is D-aminoacyl-tRNA deacylase, found in Alteromonas mediterranea (strain DSM 17117 / CIP 110805 / LMG 28347 / Deep ecotype).